Here is a 156-residue protein sequence, read N- to C-terminus: Large ribosomal subunit protein uL15 (156 aa).

Residues 1-11 (MKLNDLRDKPG) show a composition bias toward basic and acidic residues. A disordered region spans residues 1 to 40 (MKLNDLRDKPGSVKARKRVGRGIGSGTGKTGGRGVKGQKS). The segment covering 21-35 (RGIGSGTGKTGGRGV) has biased composition (gly residues).

It belongs to the universal ribosomal protein uL15 family. Part of the 50S ribosomal subunit.

Binds to the 23S rRNA. The polypeptide is Large ribosomal subunit protein uL15 (Brucella anthropi (strain ATCC 49188 / DSM 6882 / CCUG 24695 / JCM 21032 / LMG 3331 / NBRC 15819 / NCTC 12168 / Alc 37) (Ochrobactrum anthropi)).